Reading from the N-terminus, the 206-residue chain is Oligoribonuclease (206 aa).

In terms of domain architecture, Exonuclease spans L20–L183. Residue Y141 is part of the active site.

This sequence belongs to the oligoribonuclease family.

It localises to the cytoplasm. Its function is as follows. 3'-to-5' exoribonuclease specific for small oligoribonucleotides. This Burkholderia ambifaria (strain ATCC BAA-244 / DSM 16087 / CCUG 44356 / LMG 19182 / AMMD) (Burkholderia cepacia (strain AMMD)) protein is Oligoribonuclease.